The following is a 149-amino-acid chain: Arginine repressor (149 aa).

It belongs to the ArgR family.

Its subcellular location is the cytoplasm. It participates in amino-acid biosynthesis; L-arginine biosynthesis [regulation]. Regulates arginine biosynthesis genes. The protein is Arginine repressor of Exiguobacterium sibiricum (strain DSM 17290 / CCUG 55495 / CIP 109462 / JCM 13490 / 255-15).